The chain runs to 600 residues: Aspartate--tRNA(Asp/Asn) ligase (600 aa).

Glu174 serves as a coordination point for L-aspartate. An aspartate region spans residues 198 to 201; that stretch reads QLFK. Arg220 provides a ligand contact to L-aspartate. Residues 220–222 and Gln229 contribute to the ATP site; that span reads RDE. His457 lines the L-aspartate pocket. Glu491 is a binding site for ATP. Arg498 lines the L-aspartate pocket. Position 543–546 (543–546) interacts with ATP; the sequence is GLDR.

The protein belongs to the class-II aminoacyl-tRNA synthetase family. Type 1 subfamily. As to quaternary structure, homodimer.

Its subcellular location is the cytoplasm. It carries out the reaction tRNA(Asx) + L-aspartate + ATP = L-aspartyl-tRNA(Asx) + AMP + diphosphate. Functionally, aspartyl-tRNA synthetase with relaxed tRNA specificity since it is able to aspartylate not only its cognate tRNA(Asp) but also tRNA(Asn). Reaction proceeds in two steps: L-aspartate is first activated by ATP to form Asp-AMP and then transferred to the acceptor end of tRNA(Asp/Asn). This is Aspartate--tRNA(Asp/Asn) ligase from Burkholderia multivorans (strain ATCC 17616 / 249).